Here is a 690-residue protein sequence, read N- to C-terminus: Elongation factor G (690 aa).

Residues 8–283 (SKCRNIGIMA…AVVDYLPSPN (276 aa)) enclose the tr-type G domain. GTP contacts are provided by residues 17–24 (AHIDAGKT), 81–85 (DTPGH), and 135–138 (NKMD).

It belongs to the TRAFAC class translation factor GTPase superfamily. Classic translation factor GTPase family. EF-G/EF-2 subfamily.

The protein localises to the cytoplasm. Its function is as follows. Catalyzes the GTP-dependent ribosomal translocation step during translation elongation. During this step, the ribosome changes from the pre-translocational (PRE) to the post-translocational (POST) state as the newly formed A-site-bound peptidyl-tRNA and P-site-bound deacylated tRNA move to the P and E sites, respectively. Catalyzes the coordinated movement of the two tRNA molecules, the mRNA and conformational changes in the ribosome. The protein is Elongation factor G of Anaplasma phagocytophilum (strain HZ).